A 105-amino-acid polypeptide reads, in one-letter code: Large ribosomal subunit protein P2 (105 aa).

The protein belongs to the eukaryotic ribosomal protein P1/P2 family. As to quaternary structure, P1 and P2 exist as dimers at the large ribosomal subunit. Phosphorylated.

In terms of biological role, plays an important role in the elongation step of protein synthesis. This Leishmania braziliensis protein is Large ribosomal subunit protein P2 (LIP2).